We begin with the raw amino-acid sequence, 288 residues long: 18S rRNA aminocarboxypropyltransferase (288 aa).

Residues serine 43, valine 91, leucine 114, and tryptophan 129 each contribute to the S-adenosyl-L-methionine site. Over residues 209 to 221 (IWSAGNLNHKPTL) the composition is skewed to polar residues. Positions 209–267 (IWSAGNLNHKPTLNTSSTHSNSEESRSPLHEPSEASLAHDEHSIPTDDNEETLTNLQAN) are disordered. Residues 229–253 (NSEESRSPLHEPSEASLAHDEHSIP) show a composition bias toward basic and acidic residues.

This sequence belongs to the TDD superfamily. TSR3 family.

The protein resides in the cytoplasm. The protein localises to the nucleus. The enzyme catalyses an N(1)-methylpseudouridine in rRNA + S-adenosyl-L-methionine = N(1)-methyl-N(3)-[(3S)-3-amino-3-carboxypropyl]pseudouridine in rRNA + S-methyl-5'-thioadenosine + H(+). It catalyses the reaction N(1)-methylpseudouridine(1191) in yeast 18S rRNA + S-adenosyl-L-methionine = N(1)-methyl-N(3)-[(3S)-3-amino-3-carboxypropyl]pseudouridine(1191) in yeast 18S rRNA + S-methyl-5'-thioadenosine + H(+). Aminocarboxypropyltransferase that catalyzes the aminocarboxypropyl transfer on pseudouridine at position 1191 (Psi1191) in 18S rRNA. It constitutes the last step in biosynthesis of the hypermodified N1-methyl-N3-(3-amino-3-carboxypropyl) pseudouridine (m1acp3-Psi) conserved in eukaryotic 18S rRNA. Required for processing 35S pre-rRNA at site D. This is 18S rRNA aminocarboxypropyltransferase from Schizosaccharomyces pombe (strain 972 / ATCC 24843) (Fission yeast).